Reading from the N-terminus, the 289-residue chain is RNA exonuclease 4 (289 aa).

The span at 1–24 shows a compositional bias: polar residues; that stretch reads MALSSNWQALLASESNPTSNGKNK. The segment at 1–34 is disordered; that stretch reads MALSSNWQALLASESNPTSNGKNKQSNRKIRNVK. Basic residues predominate over residues 25–34; sequence QSNRKIRNVK. Residues 121 to 273 enclose the Exonuclease domain; that stretch reads YIAMDCEFVG…EDARATMLLY (153 aa).

Belongs to the REXO4 family.

Its subcellular location is the nucleus. Exoribonuclease involved in ribosome biosynthesis. Involved in the processing of ITS1, the internal transcribed spacer localized between the 18S and 5.8S rRNAs. The sequence is that of RNA exonuclease 4 (REX4) from Saccharomyces cerevisiae (strain ATCC 204508 / S288c) (Baker's yeast).